The following is a 251-amino-acid chain: 5'-nucleotidase SurE (251 aa).

Positions 8, 9, 40, and 95 each coordinate a divalent metal cation.

It belongs to the SurE nucleotidase family. A divalent metal cation serves as cofactor.

Its subcellular location is the cytoplasm. It catalyses the reaction a ribonucleoside 5'-phosphate + H2O = a ribonucleoside + phosphate. Functionally, nucleotidase that shows phosphatase activity on nucleoside 5'-monophosphates. This chain is 5'-nucleotidase SurE, found in Maridesulfovibrio salexigens (strain ATCC 14822 / DSM 2638 / NCIMB 8403 / VKM B-1763) (Desulfovibrio salexigens).